The following is a 291-amino-acid chain: ATP phosphoribosyltransferase (291 aa).

This sequence belongs to the ATP phosphoribosyltransferase family. Long subfamily. Mg(2+) is required as a cofactor.

It localises to the cytoplasm. It carries out the reaction 1-(5-phospho-beta-D-ribosyl)-ATP + diphosphate = 5-phospho-alpha-D-ribose 1-diphosphate + ATP. The protein operates within amino-acid biosynthesis; L-histidine biosynthesis; L-histidine from 5-phospho-alpha-D-ribose 1-diphosphate: step 1/9. Its activity is regulated as follows. Feedback inhibited by histidine. Functionally, catalyzes the condensation of ATP and 5-phosphoribose 1-diphosphate to form N'-(5'-phosphoribosyl)-ATP (PR-ATP). Has a crucial role in the pathway because the rate of histidine biosynthesis seems to be controlled primarily by regulation of HisG enzymatic activity. The sequence is that of ATP phosphoribosyltransferase from Geotalea daltonii (strain DSM 22248 / JCM 15807 / FRC-32) (Geobacter daltonii).